Here is a 608-residue protein sequence, read N- to C-terminus: MPMASWTLPYRVEAVDRDPGFYWQEIEDGHNNDGSADFFGQFINFDSEIPSSMADHHGHNPGMPTLADGLMLDHPSESTASASSGVSTTEDEFDLFSCSSQVDATVPSQPGSSAAPGASHDVDPRSLALADSSGLMVEKHSMVPRVSMSDPELPRVDGISLQSSPGRRVPVSQPSSPTPPNTMTRKPNKFVEALSSTIRKASKLRKPRKPIAMDRPGSPTMDNPPRALRLQHHEYNGNDVFPPSPTTCGPDSTNFVHGFCDDPFDEIPQQHPNNMRFFKTNGIHTPAESPGIKTEPGMYQPEMAGQAVWPHQQHPHPHPHPHHPQAHTHPHPHPHPHPHQQAVAGHPQHAVPVVGPAPETWPGHEYMAQNAHQSGWWDLNLLNQNGEYVVVDPQQQKNANLNLAMHAQHAELPYEYQVHDPNSAGLMIHMPQPRNDSTPAHDLALNAQTYLPPPPPIPPTTERHRPPRAPSSGARHLSCSPIRKTRQPSIPPTPTTVHSRHSSNGSVASARSASGRGMVPGTPTAMRKQRRSRDSSGGSVGDIGFVNFTPSDGGLLMTGVAPSGSSKTKARREREAMERRRRLSEAAMKAVQAAGGDVDKLMEQGFAF.

Disordered stretches follow at residues 54-88, 102-125, 146-186, 202-226, 309-352, 447-544, and 556-576; these read ADHHGHNPGMPTLADGLMLDHPSESTASASSGVST, VDATVPSQPGSSAAPGASHDVDPR, VSMS…MTRK, SKLRKPRKPIAMDRPGSPTMDNPPR, WPHQ…HAVP, AQTY…GDIG, and LMTGVAPSGSSKTKARREREA. Low complexity-rich tracts occupy residues 77 to 88, 107 to 119, and 163 to 175; these read ESTASASSGVST, PSQPGSSAAPGAS, and SSPGRRVPVSQPS. The segment covering 313–338 has biased composition (basic residues); the sequence is QHPHPHPHPHHPQAHTHPHPHPHPHP. 2 stretches are compositionally biased toward low complexity: residues 339–350 and 502–517; these read HQQAVAGHPQHA and SSNGSVASARSASGRG.

This sequence belongs to the wetA family.

Its function is as follows. AbaA and wetA are pivotal regulators of conidiophore development and conidium maturation. They act individually and together to regulate their own expression and that of numerous other sporulation-specific genes. Functions to maintain conidial dormancy by suppressing microcycle conidiation. The protein is Developmental regulatory protein wetA of Gibberella zeae (strain ATCC MYA-4620 / CBS 123657 / FGSC 9075 / NRRL 31084 / PH-1) (Wheat head blight fungus).